The primary structure comprises 154 residues: MGISYSVDVDPDETAKAMLRERHMSHKHSKEIAREIKGKTAGEAVDYLEAVIDGDRSVPFKSHNTGVGHRNDIEGWDAGRYPEKASEAFLDLLENGINNADHQGFEGEEMVIEHVAAHKVGESPGQKPRAFGRASPWNTPQVDVELVLRTEDDE.

Belongs to the universal ribosomal protein uL22 family. Part of the 50S ribosomal subunit.

In terms of biological role, this protein binds specifically to 23S rRNA. It makes multiple contacts with different domains of the 23S rRNA in the assembled 50S subunit and ribosome. Functionally, the globular domain of the protein is located near the polypeptide exit tunnel on the outside of the subunit, while an extended beta-hairpin is found that lines the wall of the exit tunnel in the center of the 70S ribosome. This is Large ribosomal subunit protein uL22 from Natronomonas pharaonis (strain ATCC 35678 / DSM 2160 / CIP 103997 / JCM 8858 / NBRC 14720 / NCIMB 2260 / Gabara) (Halobacterium pharaonis).